A 112-amino-acid chain; its full sequence is MASPNGGDDFESSLLSFEKLDRASPDLWPEQLPGVADFAASCKNPITNSPPKWMAELESEDIEMLKKLGSLTTANLMEKVKGLQNLAYQLGLEESREMTRGKFLNILERPKK.

The protein belongs to the lin-52 family. Component of the DREAM complex. Expressed in the brain, liver and retina. Highly expressed in the retinal ganglion cell and inner nuclear layers at the parr stage. Expressed at a lower level in inner segments of some retinal photoreceptors.

Functionally, may be involved in retinal development. This Oncorhynchus mykiss (Rainbow trout) protein is Protein lin-52 homolog (lin52).